The primary structure comprises 34 residues: Photosystem II reaction center protein M (34 aa).

Residues 7–27 traverse the membrane as a helical segment; it reads GFVATLLFVLVPAIFLIILYI.

It belongs to the PsbM family. PSII is composed of 1 copy each of membrane proteins PsbA, PsbB, PsbC, PsbD, PsbE, PsbF, PsbH, PsbI, PsbJ, PsbK, PsbL, PsbM, PsbT, PsbX, PsbY, PsbZ, Psb30/Ycf12, peripheral proteins PsbO, CyanoQ (PsbQ), PsbU, PsbV and a large number of cofactors. It forms dimeric complexes.

It localises to the cellular thylakoid membrane. Functionally, one of the components of the core complex of photosystem II (PSII). PSII is a light-driven water:plastoquinone oxidoreductase that uses light energy to abstract electrons from H(2)O, generating O(2) and a proton gradient subsequently used for ATP formation. It consists of a core antenna complex that captures photons, and an electron transfer chain that converts photonic excitation into a charge separation. This subunit is found at the monomer-monomer interface. In Synechococcus sp. (strain RCC307), this protein is Photosystem II reaction center protein M.